Here is a 263-residue protein sequence, read N- to C-terminus: Granzyme K (263 aa).

Positions 1–21 are cleaved as a signal peptide; it reads MRFSSWALVSLVAGVYMSSEC. A propeptide spans 22–25 (activation peptide); the sequence is FHTE. Residues 26–258 enclose the Peptidase S1 domain; that stretch reads IIGGREVQPH…YQTWIKSKLA (233 aa). A disulfide bridge connects residues Cys51 and Cys67. Catalysis depends on charge relay system residues His66 and Asp115. Disulfide bonds link Cys148-Cys219, Cys180-Cys198, and Cys209-Cys233. The Charge relay system role is filled by Ser213.

Belongs to the peptidase S1 family. Granzyme subfamily.

The protein resides in the cytoplasmic granule. The protein is Granzyme K (Gzmk) of Mus musculus (Mouse).